The sequence spans 163 residues: MSALAQAAKSLLLKEFFGAVVLSMRQFFAPKATLNYPHEKGPLSPRFRGEHALRRYPNGEERCIACKLCEAICPAQAITIEAGPRRNDGTRRTVRYDIDMVKCIYCGFCQEACPVDAIVEGPNFEFATETREELYYDKDKLLANGDRWERELARNIALDAPYR.

4Fe-4S ferredoxin-type domains are found at residues 53–83 (LRRY…IEAG) and 94–123 (VRYD…EGPN). C63, C66, C69, C73, C103, C106, C109, and C113 together coordinate [4Fe-4S] cluster.

Belongs to the complex I 23 kDa subunit family. In terms of assembly, NDH-1 is composed of 14 different subunits. Subunits NuoA, H, J, K, L, M, N constitute the membrane sector of the complex. [4Fe-4S] cluster serves as cofactor.

The protein localises to the cell inner membrane. It catalyses the reaction a quinone + NADH + 5 H(+)(in) = a quinol + NAD(+) + 4 H(+)(out). In terms of biological role, NDH-1 shuttles electrons from NADH, via FMN and iron-sulfur (Fe-S) centers, to quinones in the respiratory chain. The immediate electron acceptor for the enzyme in this species is believed to be ubiquinone. Couples the redox reaction to proton translocation (for every two electrons transferred, four hydrogen ions are translocated across the cytoplasmic membrane), and thus conserves the redox energy in a proton gradient. This Chelativorans sp. (strain BNC1) protein is NADH-quinone oxidoreductase subunit I.